The chain runs to 310 residues: Olfactory receptor 2A7 (310 aa).

Topologically, residues 1-24 (MGDNITSITEFLLLGFPVGPRIQM) are extracellular. The N-linked (GlcNAc...) asparagine glycan is linked to asparagine 4. Residues 25–48 (LLFGLFSLFYVFTLLGNGTILGLI) traverse the membrane as a helical segment. Residues 49–56 (SLDSRLHA) lie on the Cytoplasmic side of the membrane. Residues 57–78 (PMYFFLSHLAVVDIAYACNTVP) form a helical membrane-spanning segment. Residues 79-99 (RMLVNLLHPAKPISFAGRMMQ) are Extracellular-facing. Residues 100 to 119 (TFLFSTFAVTECLLLVVMSY) form a helical membrane-spanning segment. Topologically, residues 120–138 (DLYVAICHPLRYLAIMTWR) are cytoplasmic. The helical transmembrane segment at 139–157 (VCITLAVTSWTTGVLLSLI) threads the bilayer. The Extracellular segment spans residues 158–194 (HLVLLLPLPFCRPQKIYHFFCEILAVLKLACADTHIN). Residues 195–218 (ENMVLAGAISGLVGPLSTIVVSYM) traverse the membrane as a helical segment. Residues 219-235 (CILCAILQIQSREVQRK) lie on the Cytoplasmic side of the membrane. The chain crosses the membrane as a helical span at residues 236-258 (AFCTCFSHLCVIGLFYGTAIIMY). At 259–271 (VGPRYGNPKEQKK) the chain is on the extracellular side. Residues 272 to 291 (YLLLFHSLFNPMLNPLICSL) traverse the membrane as a helical segment. Topologically, residues 292–310 (RNSEVKNTLKRVLGVERAL) are cytoplasmic.

Belongs to the G-protein coupled receptor 1 family.

Its subcellular location is the cell membrane. Odorant receptor. This Homo sapiens (Human) protein is Olfactory receptor 2A7 (OR2A7).